A 481-amino-acid chain; its full sequence is MQGFGSQIFRKLLRSSNAKVSDALLQNTRTLFTAPPLHSGLQTSFTAETQQHVRQNSQNLLKQLNDEMKARKYTETVATFSSLKPFGILDSQTINRYILFLVDRIKMLNGRGNVDEATLDKLDDILRYAIEHQEIASARFWRIMLQSYIDLNLFDKASLIADMSLSHMEFLPKDERVLGNLYISALQAKILGGASFEQCGKIGSAIHEQLEGKEVVNELVAVYLIYTVFKDQGISSKAHKALVQFNGLTSFHSDVIISVFVNKGLVDQAAAYLKNSNLNERNLPTIYTTVWLLQRLFEAHHSLDPLLTIFDYYLSVSPKDITRLTNAILSLSMKQFERDRDIKKATDFITTFINKMSDVKEFKPSISTANTLFSIASRLKDVKWLSAGFDMIDKYGLKPTHVTYRSLLKAYCLLPSTCEQISQAWVNLEYRLEAISISVADKEINLLKDCILSQPDRDDQQSCLQFLNMVLSKYGKHIRSP.

The N-terminal 55 residues, Met-1–Gln-55, are a transit peptide targeting the mitochondrion. PPR repeat units lie at residues Ser-137–Pro-172 and Ser-365–Pro-399.

It localises to the mitochondrion. Functionally, mitochondrial RNA-binding protein involved in mitochondrial translation. The cox1 mRNA is one target but it is not clear if ppr8 has a single or multiple targets. The polypeptide is Pentatricopeptide repeat-containing protein 8, mitochondrial (ppr8) (Schizosaccharomyces pombe (strain 972 / ATCC 24843) (Fission yeast)).